The chain runs to 532 residues: Metal-staphylopine-binding protein CntA (532 aa).

Residues Met1–Gly20 form the signal peptide. Residue Cys21 is the site of N-palmitoyl cysteine attachment. Cys21 carries the S-diacylglycerol cysteine lipid modification. The staphylopine site is built by Arg165, Arg418, and Asn448.

Belongs to the bacterial solute-binding protein 5 family. In terms of assembly, the complex is composed of two ATP-binding proteins (CntD and CntF), two transmembrane proteins (CntB and CntC) and a solute-binding protein (CntA).

It localises to the cell membrane. Its function is as follows. Part of the ABC transporter complex CntABCDF (Opp1) involved in the uptake of metal in complex with the metallophore staphylopine (StP). May be involved in the import of a large array of divalent metals ions such as nickel, cobalt, zinc, copper and iron. Binds the metal via the metallophore StP, and transfers the StP-metal complex to the membrane-bound permease. This Staphylococcus aureus (strain Mu50 / ATCC 700699) protein is Metal-staphylopine-binding protein CntA.